The sequence spans 100 residues: Apolipoprotein C-II (100 aa).

The N-terminal stretch at 1–22 (MGSRFLLALFLILLVLGCEVQA) is a signal peptide. The interval 66-74 (SVDEKLRDM) is lipid binding. A lipoprotein lipase cofactor region spans residues 78 to 100 (SSAAMTTYASIFTDQILTLLKGE).

It belongs to the apolipoprotein C2 family. In terms of processing, proapolipoprotein C-II is synthesized as a sialic acid containing glycoprotein which is subsequently desialylated prior to its proteolytic processing. Post-translationally, proapolipoprotein C-II, the major form found in plasma undergoes proteolytic cleavage of its N-terminal hexapeptide to generate the mature form apolipoprotein C-II, which occurs as the minor form in plasma.

It localises to the secreted. Its function is as follows. Component of chylomicrons, very low-density lipoproteins (VLDL), low-density lipoproteins (LDL), and high-density lipoproteins (HDL) in plasma. Plays an important role in lipoprotein metabolism as an activator of lipoprotein lipase. The polypeptide is Apolipoprotein C-II (APOC2) (Microtus ochrogaster (Prairie vole)).